Consider the following 468-residue polypeptide: Peripherin (468 aa).

A compositionally biased stretch (low complexity) spans 1–16 (MSHHSSGLRSSISSTS). The tract at residues 1 to 22 (MSHHSSGLRSSISSTSYRRTFG) is disordered. Residues 1–96 (MSHHSSGLRS…FLATRSNEKQ (96 aa)) form a head region. 3'-nitrotyrosine is present on tyrosine 17. Residues serine 28, serine 50, and serine 59 each carry the phosphoserine modification. In terms of domain architecture, IF rod spans 94–404 (EKQELQELND…KLLEGEESRI (311 aa)). The tract at residues 97–129 (ELQELNDRFANFIEKVRFLEQQNAALRGELSQA) is coil 1A. The tract at residues 130–140 (RGQEPARADQL) is linker 1. Positions 141–236 (CQQELRELRR…KLHEEELRDL (96 aa)) are coil 1B. The tract at residues 237-259 (QVSVESQQVQQVEVEATVKPELT) is linker 2. The coil 2 stretch occupies residues 260-402 (AALRDIRAQY…YRKLLEGEES (143 aa)). 3'-nitrotyrosine is present on tyrosine 376. The segment at 403 to 468 (RISVPVHSFA…ELDKSSIHSY (66 aa)) is tail. Residues 445–468 (GEKVVTESQKEQHSELDKSSIHSY) are disordered. Tyrosine 468 is subject to Phosphotyrosine.

The protein belongs to the intermediate filament family. As to quaternary structure, forms homodimers (in vitro). Homopolymerizes into a filamentous network (in vitro). Forms heterodimers with NEFL, NEFM or NEFH (in vitro). Interacts with DST (via C-terminus). Interacts with RAB7A; the interaction is direct. Interacts with PRKCE (via phorbol-ester/DAG-type 2 domain). Phosphorylated; phosphorylation increases after nerve injury in regenerating neurons. Expressed in hypoglossal motor neurons (at protein level). Expressed in the small and large sensory neurons of the dorsal root ganglion (at protein level). Expressed in cutaneous and muscular sensory neurons.

It localises to the cytoplasm. The protein resides in the cytoskeleton. The protein localises to the cell projection. It is found in the axon. Its subcellular location is the perikaryon. In terms of biological role, class-III neuronal intermediate filament protein. My form an independent structural network without the involvement of other neurofilaments or may cooperate with the neuronal intermediate filament proteins NEFL, NEFH, NEFM and INA to form a filamentous network. Assembly of the neuronal intermediate filaments may be regulated by RAB7A. Plays a role in the development of unmyelinated sensory neurons. May be involved in axon elongation and axon regeneration after injury. Inhibits neurite extension in type II spiral ganglion neurons in the cochlea. The protein is Peripherin (Prph) of Rattus norvegicus (Rat).